The chain runs to 293 residues: Aminodeoxychorismate lyase (293 aa).

Lys-146 bears the N6-(pyridoxal phosphate)lysine mark.

This sequence belongs to the class-IV pyridoxal-phosphate-dependent aminotransferase family. In terms of assembly, homodimer. Pyridoxal 5'-phosphate serves as cofactor.

The catalysed reaction is 4-amino-4-deoxychorismate = 4-aminobenzoate + pyruvate + H(+). It participates in cofactor biosynthesis; tetrahydrofolate biosynthesis; 4-aminobenzoate from chorismate: step 2/2. Involved in the biosynthesis of p-aminobenzoate (PABA), a precursor of tetrahydrofolate. Converts 4-amino-4-deoxychorismate into 4-aminobenzoate (PABA) and pyruvate. This Bacillus subtilis (strain 168) protein is Aminodeoxychorismate lyase.